Reading from the N-terminus, the 163-residue chain is Ribosome maturation factor RimM (163 aa).

Residues 90–155 enclose the PRC barrel domain; it reads VGEYYCKDLV…ADIDLNKKRL (66 aa).

It belongs to the RimM family. As to quaternary structure, binds ribosomal protein uS19.

It localises to the cytoplasm. Functionally, an accessory protein needed during the final step in the assembly of 30S ribosomal subunit, possibly for assembly of the head region. Essential for efficient processing of 16S rRNA. May be needed both before and after RbfA during the maturation of 16S rRNA. It has affinity for free ribosomal 30S subunits but not for 70S ribosomes. This chain is Ribosome maturation factor RimM, found in Neorickettsia sennetsu (strain ATCC VR-367 / Miyayama) (Ehrlichia sennetsu).